The primary structure comprises 391 residues: Chorismate synthase (391 aa).

R48 lines the NADP(+) pocket. FMN is bound by residues R126–S128, G286, K301–S305, and R328.

This sequence belongs to the chorismate synthase family. FMNH2 serves as cofactor.

The enzyme catalyses 5-O-(1-carboxyvinyl)-3-phosphoshikimate = chorismate + phosphate. The protein operates within metabolic intermediate biosynthesis; chorismate biosynthesis; chorismate from D-erythrose 4-phosphate and phosphoenolpyruvate: step 7/7. Its function is as follows. Catalyzes the anti-1,4-elimination of the C-3 phosphate and the C-6 proR hydrogen from 5-enolpyruvylshikimate-3-phosphate (EPSP) to yield chorismate, which is the branch point compound that serves as the starting substrate for the three terminal pathways of aromatic amino acid biosynthesis. This reaction introduces a second double bond into the aromatic ring system. The sequence is that of Chorismate synthase from Saccharolobus islandicus (strain M.16.27) (Sulfolobus islandicus).